The primary structure comprises 259 residues: Light-harvesting complex stress-related protein 3.1, chloroplastic (259 aa).

Residues 1–45 constitute a chloroplast transit peptide; the sequence is MLANVVSRKASGLRQTPARATVAVKSVSGRRTTAAEPQTAAPVAA. Tyr51 serves as a coordination point for chlorophyll b. The chlorophyll a site is built by Phe66, Glu87, and His90. Residue Arg92 participates in chlorophyll b binding. A helical membrane pass occupies residues 93–113; that stretch reads VAMLAALGFVVGEQLQDFPLF. Position 130 (Gln130) interacts with chlorophyll a. The chain crosses the membrane as a helical span at residues 137-157; sequence EPLLIAIGVAESYRVAVGWAT. Positions 147 and 150 each coordinate chlorophyll b. Lys196, Glu197, Asn200, Arg202, and Gln214 together coordinate chlorophyll a. The helical transmembrane segment at 203–223 threads the bilayer; that stretch reads LAMIAIAAFVAQELVEQTEIF.

It belongs to the light-harvesting chlorophyll a/b-binding (LHC) protein family. Interacts with the photosystem II-light-harvesting complex II (PSII-LHCII) supercomplex to form PSII-LHCII-LHCSR3 supercomplex.

The protein resides in the plastid. It localises to the chloroplast thylakoid membrane. Functionally, required for non-photochemical quenching (NPQ), a mechanism that converts and dissipates the harmful excess absorbed light energy into heat and protect the photosynthetic apparatus from photo-oxidative damage. NPQ includes dissipating excess light energy to heat (qE) and the reversible coupling of LHCII to photosystems (state transitions or qT), which are considered separate NPQ mechanisms. Is responsible for most of the excess light energy to heat dissipation (qE), also known as energy-dependent chlorophyll fluorescence quenching activity of chlorophyll excited states. Involved in a de-coupling and re-coupling of energy transfer to photosystem II (PSII) during qT. Binds chlorophyll a and b. Is able to sense luminal acidification of the thylakoid membranes, which occurs along with elevated electron flow caused by excess light. Establishes interactions with photosystem II (PSII) antenna components upon lumen acidification, and protonation of lumen-exposed, negatively charged residues both in LHCSR3 and in PSII antenna components. Mediates excitation energy transfer from light-harvesting complex II (LHCII) to photosystem I (PSI), rather than photosystem II (PSII), at low pH, which mimics the acidified lumen of the thylakoid membranes in high light-exposed chloroplasts. Activates PSI-dependent fluorescence quenching in addition to dissipating excitation energy in LHCII to avoid photooxidative stress under excess light. Contributes with PGRL1 to the regulation of electron flow upstream of photosystem I (PSI), and limits the accumulation of electrons on the PSI acceptor side, thus avoiding PSI photoinhibition. The chain is Light-harvesting complex stress-related protein 3.1, chloroplastic from Chlamydomonas reinhardtii (Chlamydomonas smithii).